We begin with the raw amino-acid sequence, 305 residues long: tRNA dimethylallyltransferase (305 aa).

Residue 9 to 16 participates in ATP binding; that stretch reads GPTAVGKT. 11–16 contacts substrate; the sequence is TAVGKT. Positions 34–37 are interaction with substrate tRNA; it reads DSRQ.

This sequence belongs to the IPP transferase family. Monomer. Mg(2+) serves as cofactor.

It carries out the reaction adenosine(37) in tRNA + dimethylallyl diphosphate = N(6)-dimethylallyladenosine(37) in tRNA + diphosphate. In terms of biological role, catalyzes the transfer of a dimethylallyl group onto the adenine at position 37 in tRNAs that read codons beginning with uridine, leading to the formation of N6-(dimethylallyl)adenosine (i(6)A). This chain is tRNA dimethylallyltransferase, found in Roseiflexus sp. (strain RS-1).